The sequence spans 191 residues: Calcium-binding protein L (191 aa).

A lipid anchor (N-myristoyl glycine) is attached at G2. EF-hand domains are found at residues 25 to 59 (EQVS…RFKD), 60 to 95 (YDDA…ITKS), and 96 to 131 (PVSD…ALNT). D73, D75, N77, R79, and E84 together coordinate Ca(2+).

The protein belongs to the recoverin family.

The sequence is that of Calcium-binding protein L (cbpL) from Dictyostelium discoideum (Social amoeba).